The following is a 122-amino-acid chain: Double-headed protease inhibitor, submandibular gland (122 aa).

Kazal-like domains lie at Gly-10–Ile-70 and Glu-71–Ser-121. 6 disulfides stabilise this stretch: Cys-16–Cys-50, Cys-28–Cys-47, Cys-36–Cys-68, Cys-72–Cys-101, Cys-79–Cys-98, and Cys-87–Cys-119.

It localises to the secreted. In terms of biological role, this inhibitor is composed of two homologous actively inhibiting halves: one which inhibits trypsin, the other which inhibits elastase. This chain is Double-headed protease inhibitor, submandibular gland, found in Panthera uncia (Snow leopard).